The sequence spans 337 residues: ATP-dependent 6-phosphofructokinase (337 aa).

Position 11 (G11) interacts with ATP. 21-25 (RAVVR) provides a ligand contact to ADP. ATP contacts are provided by residues 72 to 73 (RY) and 102 to 105 (GDGS). D103 serves as a coordination point for Mg(2+). Residue 125–127 (TID) coordinates substrate. Residue D127 is the Proton acceptor of the active site. R154 lines the ADP pocket. Residues R162 and 169 to 171 (MGR) each bind substrate. ADP is bound by residues 185-187 (GAD), K212, and 214-216 (KNH). Residues E223, R245, and 251–254 (HILR) each bind substrate.

It belongs to the phosphofructokinase type A (PFKA) family. ATP-dependent PFK group I subfamily. Prokaryotic clade 'B1' sub-subfamily. As to quaternary structure, homotetramer. It depends on Mg(2+) as a cofactor.

The protein resides in the cytoplasm. It carries out the reaction beta-D-fructose 6-phosphate + ATP = beta-D-fructose 1,6-bisphosphate + ADP + H(+). It participates in carbohydrate degradation; glycolysis; D-glyceraldehyde 3-phosphate and glycerone phosphate from D-glucose: step 3/4. With respect to regulation, allosterically activated by ADP and other diphosphonucleosides, and allosterically inhibited by phosphoenolpyruvate. Its function is as follows. Catalyzes the phosphorylation of D-fructose 6-phosphate to fructose 1,6-bisphosphate by ATP, the first committing step of glycolysis. In Streptococcus pyogenes serotype M4 (strain MGAS10750), this protein is ATP-dependent 6-phosphofructokinase.